The primary structure comprises 54 residues: UPF0391 membrane protein R00741 (54 aa).

2 consecutive transmembrane segments (helical) span residues 5–25 (ALVF…GIAG) and 30–50 (IAQV…VAGL).

Belongs to the UPF0391 family.

Its subcellular location is the cell membrane. The chain is UPF0391 membrane protein R00741 from Rhizobium meliloti (strain 1021) (Ensifer meliloti).